The following is a 490-amino-acid chain: ATP synthase subunit beta, chloroplastic (490 aa).

T6 bears the Phosphothreonine mark. Phosphoserine is present on S13. Residue G172–T179 coordinates ATP.

Belongs to the ATPase alpha/beta chains family. In terms of assembly, F-type ATPases have 2 components, CF(1) - the catalytic core - and CF(0) - the membrane proton channel. CF(1) has five subunits: alpha(3), beta(3), gamma(1), delta(1), epsilon(1). CF(0) has four main subunits: a(1), b(1), b'(1) and c(9-12).

The protein resides in the plastid. The protein localises to the chloroplast thylakoid membrane. It carries out the reaction ATP + H2O + 4 H(+)(in) = ADP + phosphate + 5 H(+)(out). In terms of biological role, produces ATP from ADP in the presence of a proton gradient across the membrane. The catalytic sites are hosted primarily by the beta subunits. The sequence is that of ATP synthase subunit beta, chloroplastic from Aethionema cordifolium (Lebanon stonecress).